The sequence spans 294 residues: Diaminopimelate epimerase (294 aa).

Substrate-binding residues include asparagine 13, glutamine 46, and asparagine 69. Cysteine 78 (proton donor) is an active-site residue. Substrate-binding positions include 79–80 (GN), asparagine 173, asparagine 206, and 224–225 (ER). Cysteine 233 (proton acceptor) is an active-site residue. 234–235 (GT) contacts substrate.

The protein belongs to the diaminopimelate epimerase family. In terms of assembly, homodimer.

The protein localises to the cytoplasm. The catalysed reaction is (2S,6S)-2,6-diaminopimelate = meso-2,6-diaminopimelate. It participates in amino-acid biosynthesis; L-lysine biosynthesis via DAP pathway; DL-2,6-diaminopimelate from LL-2,6-diaminopimelate: step 1/1. Functionally, catalyzes the stereoinversion of LL-2,6-diaminopimelate (L,L-DAP) to meso-diaminopimelate (meso-DAP), a precursor of L-lysine and an essential component of the bacterial peptidoglycan. The protein is Diaminopimelate epimerase of Variovorax paradoxus (strain S110).